Consider the following 55-residue polypeptide: Large ribosomal subunit protein bL33 (55 aa).

Belongs to the bacterial ribosomal protein bL33 family.

The polypeptide is Large ribosomal subunit protein bL33 (Xanthomonas oryzae pv. oryzae (strain PXO99A)).